Consider the following 281-residue polypeptide: Bifunctional protein FolD (281 aa).

Residues 164–166 (GRS) and Ser-189 contribute to the NADP(+) site.

This sequence belongs to the tetrahydrofolate dehydrogenase/cyclohydrolase family. In terms of assembly, homodimer.

The enzyme catalyses (6R)-5,10-methylene-5,6,7,8-tetrahydrofolate + NADP(+) = (6R)-5,10-methenyltetrahydrofolate + NADPH. The catalysed reaction is (6R)-5,10-methenyltetrahydrofolate + H2O = (6R)-10-formyltetrahydrofolate + H(+). It functions in the pathway one-carbon metabolism; tetrahydrofolate interconversion. In terms of biological role, catalyzes the oxidation of 5,10-methylenetetrahydrofolate to 5,10-methenyltetrahydrofolate and then the hydrolysis of 5,10-methenyltetrahydrofolate to 10-formyltetrahydrofolate. This is Bifunctional protein FolD from Enterococcus faecalis (strain ATCC 700802 / V583).